A 271-amino-acid polypeptide reads, in one-letter code: MFSIQQPLLVFSDLDGTLLDSHSYDWQPAAPWLSRLHEANVPVILCSSKTSAEMLYLQKMLGLQGLPLIAENGAVIQLAEQWQNIDGFPRIISGISHSEICQVLNTLREKEHFKFTTFDDVDDATIAEWTGLSRSQAALTQLHEASVTLIWRDSDEHMAQFIARLNELGLQFMQGARFWHVLDASAGKDQAANWIIATYQQLSGRRPTTLGLGDGPNDAPLLEVMDYAVIVKGLNREGVHLHDEDPARVWRTQREGPEGWREGLDHFFSAR.

D13 serves as the catalytic Nucleophile. 3 residues coordinate Mg(2+): D13, D15, and D214.

It belongs to the HAD-like hydrolase superfamily. MPGP family. Requires Mg(2+) as cofactor.

Its subcellular location is the cytoplasm. The catalysed reaction is 2-O-(alpha-D-mannosyl)-3-phosphoglycerate + H2O = (2R)-2-O-(alpha-D-mannosyl)-glycerate + phosphate. The polypeptide is Mannosyl-3-phosphoglycerate phosphatase (Escherichia coli O127:H6 (strain E2348/69 / EPEC)).